The primary structure comprises 204 residues: Leucyl/phenylalanyl-tRNA--protein transferase (204 aa).

The protein belongs to the L/F-transferase family.

The protein localises to the cytoplasm. The enzyme catalyses N-terminal L-lysyl-[protein] + L-leucyl-tRNA(Leu) = N-terminal L-leucyl-L-lysyl-[protein] + tRNA(Leu) + H(+). It catalyses the reaction N-terminal L-arginyl-[protein] + L-leucyl-tRNA(Leu) = N-terminal L-leucyl-L-arginyl-[protein] + tRNA(Leu) + H(+). It carries out the reaction L-phenylalanyl-tRNA(Phe) + an N-terminal L-alpha-aminoacyl-[protein] = an N-terminal L-phenylalanyl-L-alpha-aminoacyl-[protein] + tRNA(Phe). Its function is as follows. Functions in the N-end rule pathway of protein degradation where it conjugates Leu, Phe and, less efficiently, Met from aminoacyl-tRNAs to the N-termini of proteins containing an N-terminal arginine or lysine. The chain is Leucyl/phenylalanyl-tRNA--protein transferase from Rhizobium johnstonii (strain DSM 114642 / LMG 32736 / 3841) (Rhizobium leguminosarum bv. viciae).